The chain runs to 160 residues: SsrA-binding protein (160 aa).

This sequence belongs to the SmpB family.

The protein resides in the cytoplasm. In terms of biological role, required for rescue of stalled ribosomes mediated by trans-translation. Binds to transfer-messenger RNA (tmRNA), required for stable association of tmRNA with ribosomes. tmRNA and SmpB together mimic tRNA shape, replacing the anticodon stem-loop with SmpB. tmRNA is encoded by the ssrA gene; the 2 termini fold to resemble tRNA(Ala) and it encodes a 'tag peptide', a short internal open reading frame. During trans-translation Ala-aminoacylated tmRNA acts like a tRNA, entering the A-site of stalled ribosomes, displacing the stalled mRNA. The ribosome then switches to translate the ORF on the tmRNA; the nascent peptide is terminated with the 'tag peptide' encoded by the tmRNA and targeted for degradation. The ribosome is freed to recommence translation, which seems to be the essential function of trans-translation. This is SsrA-binding protein from Histophilus somni (strain 129Pt) (Haemophilus somnus).